The primary structure comprises 1404 residues: DNA-directed RNA polymerase subunit beta' (1404 aa).

The Zn(2+) site is built by Cys-70, Cys-72, Cys-85, and Cys-88. Residues Asp-458, Asp-460, and Asp-462 each contribute to the Mg(2+) site. Cys-813, Cys-887, Cys-894, and Cys-897 together coordinate Zn(2+). The segment at 1377–1404 is disordered; the sequence is ERRAIAESEAAELEASQAETSDENAAAE.

It belongs to the RNA polymerase beta' chain family. The RNAP catalytic core consists of 2 alpha, 1 beta, 1 beta' and 1 omega subunit. When a sigma factor is associated with the core the holoenzyme is formed, which can initiate transcription. Requires Mg(2+) as cofactor. Zn(2+) serves as cofactor.

It carries out the reaction RNA(n) + a ribonucleoside 5'-triphosphate = RNA(n+1) + diphosphate. Its function is as follows. DNA-dependent RNA polymerase catalyzes the transcription of DNA into RNA using the four ribonucleoside triphosphates as substrates. This chain is DNA-directed RNA polymerase subunit beta', found in Polaromonas naphthalenivorans (strain CJ2).